A 1651-amino-acid polypeptide reads, in one-letter code: Alsin (1651 aa).

3 RCC1 repeats span residues 59-108, 109-167, and 169-218; these read DGEV…AVTE, SGVV…ALSI, and REIW…ALVQ. Residues 444–476 form a disordered region; sequence REEQVKQESLQGKKSSSLMDIREEESEGGSRRL. Over residues 450–461 the composition is skewed to polar residues; it reads QESLQGKKSSSL. Phosphoserine occurs at positions 459, 460, 477, and 486. Thr504 is modified (phosphothreonine). RCC1 repeat units lie at residues 519 to 570 and 572 to 621; these read RTEV…ALTA and SQVY…FLVD. N6-acetyllysine is present on Lys527. Positions 684 to 879 constitute a DH domain; the sequence is GYIASLHELA…ESLALHLGKK (196 aa). Positions 895 to 1001 constitute a PH domain; it reads GKMTDSLRKP…RAISQAVDQA (107 aa). 8 MORN repeats span residues 1043–1065, 1066–1088, 1094–1116, 1117–1139, 1145–1167, 1169–1191, 1192–1214, and 1215–1238; these read YDGR…DGKV, YSGT…NKAL, YVGH…SGEV, FEGC…KLTS, FIGQ…TRGE, YMGM…FGLY, YEGN…DDTI, and YEGE…NGDY. At Ser1329 the chain carries Phosphoserine. Residues 1507–1651 form the VPS9 domain; sequence KQPDIALLGF…YYQIQREKLN (145 aa).

As to quaternary structure, forms a heteromeric complex with ALS2CL. Interacts with ALS2CL.

May act as a GTPase regulator. Controls survival and growth of spinal motoneurons. The sequence is that of Alsin (Als2) from Rattus norvegicus (Rat).